Reading from the N-terminus, the 277-residue chain is Type IV methyl-directed restriction enzyme EcoKMcrA (277 aa).

Positions 207–257 constitute an HNH domain; sequence CENCGKNAPFYLNDGNPYLEVHHVIPLSSGGADTTDNCVALCPNCHRELHY.

Its function is as follows. Restriction of 5-methyl and 5-hydroxymethylcytosines at the specific DNA sequence 5'-C(me)CGG-3'. The sequence is that of Type IV methyl-directed restriction enzyme EcoKMcrA from Escherichia coli (strain K12).